Here is a 172-residue protein sequence, read N- to C-terminus: Podoplanin (172 aa).

The first 22 residues, 1-22 (MWTVPVLFWVLGSVWFWDSAQG), serve as a signal peptide directing secretion. Over 23–141 (GTIGVNEDDI…KKDGLPVVTL (119 aa)) the chain is Extracellular. O-linked (GalNAc...) threonine glycans are attached at residues threonine 37, threonine 51, threonine 52, threonine 53, and threonine 56. The interval 49–132 (KITTTGATGG…AGDETQTTDK (84 aa)) is disordered. Residues 51–63 (TTTGATGGLNEST) are compositionally biased toward polar residues. Asparagine 60 is a glycosylation site (N-linked (GlcNAc...) asparagine). Threonine 63, threonine 71, and threonine 77 each carry an O-linked (GalNAc...) threonine glycan. Residues 72–81 (QRERGTKPPL) are compositionally biased toward basic and acidic residues. O-linked (GalNAc...) serine glycosylation occurs at serine 85. Threonine 86 carries an O-linked (GalNAc...) threonine glycan. Serine 87 carries an O-linked (GalNAc...) serine glycan. Threonine 89 carries an O-linked (GalNAc...) threonine glycan. A glycan (O-linked (GalNAc...) serine) is linked at serine 90. The span at 90-99 (SDHDHREHES) shows a compositional bias: basic and acidic residues. 5 O-linked (GalNAc...) threonine glycosylation sites follow: threonine 100, threonine 101, threonine 102, threonine 107, and threonine 115. The segment covering 100–109 (TTTVKVVTSH) has biased composition (low complexity). Residues 110-132 (SVDKKTSHPNRDNAGDETQTTDK) show a composition bias toward basic and acidic residues. Residues 142-162 (VGIIVGVLLAIGFVGGIFIVV) form a helical membrane-spanning segment. Positions 143-147 (GIIVG) are requires for dimerization and lipidd rafts association. Residues 163–172 (MKKISGRFSP) are Cytoplasmic-facing. Residues 164-165 (KK) are requires for interaction with MSN and EZR.

Belongs to the podoplanin family. In terms of assembly, homodimer. Interacts with CLEC1B; the interaction is independent of CLEC1B glycosylation and activates CLEC1B; the interaction is dependent of sialic acid on O-glycans. Interacts with CD9; this interaction is homophilic and attenuates platelet aggregation and pulmonary metastasis induced by PDPN. Interacts with LGALS8; the interaction is glycosylation-dependent; may participate in connection of the lymphatic endothelium to the surrounding extracellular matrix. Interacts with HSPA9. Interacts (via extracellular domain) with CD44; this interaction is required for PDPN-mediated directional migration and regulation of lamellipodia extension/stabilization during cell spreading and migration. Interacts (via cytoplasmic domain) with MSN and EZR; activates RHOA and promotes epithelial-mesenchymal transition. Interacts with CCL21; relocalized PDPN to the basolateral membrane. In terms of processing, extensively O-glycosylated. Contains sialic acid residues. O-glycosylation is necessary for platelet aggregation activity. Disialylated at Thr-52; sialic acid is critical for platelet-aggregating activity and for CLEC1B interaction. Post-translationally, phosphorylated by PKA; decreases cell migration. The N-terminus is blocked. Detected at high levels in lung and brain, at lower levels in kidney, stomach, liver, spleen and esophagus, and not detected in skin and small intestine. Expressed in epithelial cells of choroid plexus, ependyma, glomerulus and alveolus, in mesothelial cells and in endothelia of lymphatic vessels. Also expressed in stromal cells of peripheral lymphoid tissue and thymic epithelial cells. Detected in carcinoma cell lines and cultured fibroblasts. Expressed at higher levels in colon carcinomas than in normal colon tissue.

The protein resides in the membrane. The protein localises to the cell projection. Its subcellular location is the lamellipodium membrane. It localises to the filopodium membrane. It is found in the microvillus membrane. The protein resides in the ruffle membrane. The protein localises to the membrane raft. Its subcellular location is the apical cell membrane. It localises to the basolateral cell membrane. It is found in the invadopodium. In terms of biological role, mediates effects on cell migration and adhesion through its different partners. During development plays a role in blood and lymphatic vessels separation by binding CLEC1B, triggering CLEC1B activation in platelets and leading to platelet activation and/or aggregation. Interaction with CD9, on the contrary, attenuates platelet aggregation and pulmonary metastasis induced by PDPN. Mediates effects on cell migration and adhesion through its different partners. Through MSN or EZR interaction promotes epithelial-mesenchymal transition (EMT) leading to ERZ phosphorylation and triggering RHOA activation leading to cell migration increase and invasiveness. Interaction with CD44 promotes directional cell migration in epithelial and tumor cells. In lymph nodes (LNs), controls fibroblastic reticular cells (FRCs) adhesion to the extracellular matrix (ECM) and contraction of the actomyosin by maintaining ERM proteins (EZR; MSN and RDX) and MYL9 activation through association with unknown transmembrane proteins. Engagement of CLEC1B by PDPN promotes FRCs relaxation by blocking lateral membrane interactions leading to reduction of ERM proteins (EZR; MSN and RDX) and MYL9 activation. Through binding with LGALS8 may participate in connection of the lymphatic endothelium to the surrounding extracellular matrix. In keratinocytes, induces changes in cell morphology showing an elongated shape, numerous membrane protrusions, major reorganization of the actin cytoskeleton, increased motility and decreased cell adhesion. Controls invadopodia stability and maturation leading to efficient degradation of the extracellular matrix (ECM) in tumor cells through modulation of RHOC activity in order to activate ROCK1/ROCK2 and LIMK1/LIMK2 and inactivation of CFL1. Required for normal lung cell proliferation and alveolus formation at birth. Does not function as a water channel or as a regulator of aquaporin-type water channels. Does not have any effect on folic acid or amino acid transport. In Mus musculus (Mouse), this protein is Podoplanin.